Consider the following 383-residue polypeptide: ATP phosphoribosyltransferase regulatory subunit (383 aa).

This sequence belongs to the class-II aminoacyl-tRNA synthetase family. HisZ subfamily. In terms of assembly, heteromultimer composed of HisG and HisZ subunits.

The protein resides in the cytoplasm. Its pathway is amino-acid biosynthesis; L-histidine biosynthesis; L-histidine from 5-phospho-alpha-D-ribose 1-diphosphate: step 1/9. Functionally, required for the first step of histidine biosynthesis. May allow the feedback regulation of ATP phosphoribosyltransferase activity by histidine. This Neisseria meningitidis serogroup C (strain 053442) protein is ATP phosphoribosyltransferase regulatory subunit.